The primary structure comprises 134 residues: Profilin-2 (134 aa).

Thr-114 bears the Phosphothreonine mark.

The protein belongs to the profilin family. Occurs in many kinds of cells as a complex with monomeric actin in a 1:1 ratio. Post-translationally, phosphorylated by MAP kinases.

The protein resides in the cytoplasm. It localises to the cytoskeleton. In terms of biological role, binds to actin and affects the structure of the cytoskeleton. At high concentrations, profilin prevents the polymerization of actin, whereas it enhances it at low concentrations. By binding to PIP2, it inhibits the formation of IP3 and DG. In Nicotiana tabacum (Common tobacco), this protein is Profilin-2 (PRO2).